Reading from the N-terminus, the 354-residue chain is MNTLFMHCRPGFEGEVCAEISEHAARLGVSGYAKSKPQSASAEFVCSEEGGAERLMGELRFNQLIFPRQWARGGFVELPETDRISVLLSQLADFPVFGSLWLEVLDSNEGKELSTFCRKFEVPLRKALEKAGRLVDDASRPRLLLSFISGRRVFVGVAPANNSALWPMGIPRLKFPREAPSRSTLKLEEAWHQFIPREQWEQRLGDDMTGVDLGASPGGWTYQLVRRGMLVTAIDNGPMAESLMDTGLVQHLMADGFTWQPKQPVDWMVCDIVEKPARTTSLIETWLGEGLCREAVVNLKLPMKQRYAEVRRLLDRMEATFKARKIRVSIACKQLYHDREEVTCHLRRLDLKPR.

Residues Ser183, 216–219, Asp235, Asp255, and Asp271 contribute to the S-adenosyl-L-methionine site; that span reads SPGG. The active-site Proton acceptor is the Lys300.

This sequence belongs to the class I-like SAM-binding methyltransferase superfamily. RNA methyltransferase RlmE family. RlmM subfamily. As to quaternary structure, monomer.

It localises to the cytoplasm. It catalyses the reaction cytidine(2498) in 23S rRNA + S-adenosyl-L-methionine = 2'-O-methylcytidine(2498) in 23S rRNA + S-adenosyl-L-homocysteine + H(+). Its function is as follows. Catalyzes the 2'-O-methylation at nucleotide C2498 in 23S rRNA. The chain is Ribosomal RNA large subunit methyltransferase M from Pseudomonas putida (strain GB-1).